We begin with the raw amino-acid sequence, 204 residues long: Somatotropin (204 aa).

The first 17 residues, 1-17 (MDRAVLLLSVLSLGVSS), serve as a signal peptide directing secretion. Position 18 is a pyrrolidone carboxylic acid (Gln-18). A Zn(2+)-binding site is contributed by His-35. An intrachain disulfide couples Cys-69 to Cys-177. Glu-186 is a Zn(2+) binding site. Cys-194 and Cys-202 form a disulfide bridge.

Belongs to the somatotropin/prolactin family.

The protein resides in the secreted. In terms of biological role, growth hormone plays an important role in growth control and is involved in the regulation of several anabolic processes. Implicated as an osmoregulatory substance important for seawater adaptation. The sequence is that of Somatotropin (gh) from Morone saxatilis (Striped bass).